Reading from the N-terminus, the 167-residue chain is UPF0114 protein in repA1-repA2 intergenic region (167 aa).

A run of 3 helical transmembrane segments spans residues 15–35 (LMFP…LKFF), 53–73 (LVLI…LVMV), and 136–156 (IILC…MAYI).

The protein belongs to the UPF0114 family.

It is found in the cell membrane. The chain is UPF0114 protein in repA1-repA2 intergenic region from Buchnera aphidicola subsp. Pterocomma populeum.